Here is a 462-residue protein sequence, read N- to C-terminus: NAD-capped RNA hydrolase NUDT12 (462 aa).

3 ANK repeats span residues 11–40 (EIVTQFHCSAAEGDIAKLTGILSHSPSLLN), 45–74 (NGWTALMYAARNGHPEIVQFLLEKGCDRSI), and 78–98 (SRQTALDIAVFWGYKHIANLL). An N6-succinyllysine modification is found at Lys-185. Cys-284 and Cys-287 together coordinate Zn(2+). The residue at position 292 (Lys-292) is an N6-succinyllysine. Cys-302 and Cys-307 together coordinate Zn(2+). Substrate contacts are provided by residues Tyr-318, 354 to 356 (AGF), Glu-370, Glu-374, and Glu-415. Positions 319–453 (PRVDPVVIMQ…SRAIAHQLIK (135 aa)) constitute a Nudix hydrolase domain. Positions 354, 370, 374, and 415 each coordinate Mg(2+). Positions 355 to 376 (GFIEPGETIEDAVRREVEEESG) match the Nudix box motif. The Microbody targeting signal motif lies at 460 to 462 (PNL).

Belongs to the Nudix hydrolase family. NudC subfamily. In terms of assembly, homodimer. Homodimerization is essential for its catalytic activity and protein stability. Interacts (via ANK repeats) with BLMH. The cofactor is Mg(2+). Zn(2+) is required as a cofactor.

Its subcellular location is the cytoplasm. It is found in the peroxisome. The protein resides in the cytoplasmic granule. The catalysed reaction is a 5'-end NAD(+)-phospho-ribonucleoside in mRNA + H2O = a 5'-end phospho-adenosine-phospho-ribonucleoside in mRNA + beta-nicotinamide D-ribonucleotide + 2 H(+). It carries out the reaction NAD(+) + H2O = beta-nicotinamide D-ribonucleotide + AMP + 2 H(+). The enzyme catalyses NADH + H2O = reduced beta-nicotinamide D-ribonucleotide + AMP + 2 H(+). It catalyses the reaction NADPH + H2O = reduced beta-nicotinamide D-ribonucleotide + adenosine 2',5'-bisphosphate + 2 H(+). Its function is as follows. mRNA decapping enzyme that specifically removes the nicotinamide adenine dinucleotide (NAD) cap from a subset of mRNAs by hydrolyzing the diphosphate linkage to produce nicotinamide mononucleotide (NMN) and 5' monophosphate mRNA. The NAD-cap is present at the 5'-end of some RNAs; in contrast to the canonical N7 methylguanosine (m7G) cap, the NAD cap promotes mRNA decay. Preferentially acts on NAD-capped transcripts in response to nutrient stress. Also acts on free nicotinamide adenine dinucleotide molecules: hydrolyzes NAD(H) into NMN(H) and AMP, and NADPH into NMNH and 2',5'-ADP. May act to regulate the concentration of peroxisomal nicotinamide nucleotide cofactors required for oxidative metabolism in this organelle. Regulates the levels of circadian clock components PER1, PER2, PER3 and CRY2 in the liver. In Macaca fascicularis (Crab-eating macaque), this protein is NAD-capped RNA hydrolase NUDT12.